The chain runs to 461 residues: Putative 2,3-dihydroxypropane-1-sulfonate exporter (461 aa).

Residues 1-20 (MSHITTEDPATLRLPFKEKL) are Cytoplasmic-facing. Residues 21–41 (SYGIGDLASNILLDIGTLYLL) form a helical membrane-spanning segment. Over 42 to 47 (KFYTDV) the chain is Periplasmic. Residues 48-68 (LGLPGTYGGIIFLISKFFTAF) form a helical membrane-spanning segment. Residues 69-92 (TDMGTGIMLDSRRKIGPKGKFRPF) lie on the Cytoplasmic side of the membrane. A helical membrane pass occupies residues 93 to 113 (ILYASFPVTLLAIANFVGTPF). The Periplasmic portion of the chain corresponds to 114–123 (DVTGKTVMAT). Residues 124–144 (ILFMLYGLFFSMMNCSYGAMV) form a helical membrane-spanning segment. The Cytoplasmic portion of the chain corresponds to 145–162 (PAITKNPNERASLAAWRQ). A helical transmembrane segment spans residues 163 to 183 (GGATLGLLLCTVGFVPVMNLI). The Periplasmic segment spans residues 184–188 (EGNQQ). Residues 189 to 209 (LGYIFAATLFSLFGLLFMWIC) form a helical membrane-spanning segment. Residues 210-243 (YSGVKERYVETQPANPAQKPGLLQSFRAIAGNRP) lie on the Cytoplasmic side of the membrane. Residues 244 to 264 (LFILCIANLCTLGAFNVKLAI) traverse the membrane as a helical segment. At 265–276 (QVYYTQYVLNDP) the chain is on the periplasmic side. Residues 277–297 (ILLSYMGFFSMGCIFIGVFLM) form a helical membrane-spanning segment. Topologically, residues 298–308 (PASVRRFGKKK) are cytoplasmic. A helical transmembrane segment spans residues 309 to 329 (VYIGGLLIWVLGDLLNYFFGG). Glycine 330 is a topological domain (periplasmic). A helical transmembrane segment spans residues 331-351 (SVSFVAFSCLAFFGSAFVNSL). Topologically, residues 352 to 387 (NWALVSDTVEYGEWRTGVRSEGTVYTGFTFFRKVSQ) are cytoplasmic. Residues 388 to 408 (ALAGFFPGWMLTQIGYVPNVA) traverse the membrane as a helical segment. The Periplasmic segment spans residues 409 to 419 (QADHTIEGLRQ). The chain crosses the membrane as a helical span at residues 420-440 (LIFIYPSALAVVTIVAMGCFY). Residues 441 to 461 (SLNEKMYVRIVEEIEARKRTA) are Cytoplasmic-facing.

This sequence belongs to the sodium:galactoside symporter (TC 2.A.2) family.

It is found in the cell inner membrane. Could be involved in the export of 2,3-dihydroxypropane-1-sulfonate (DHPS). The sequence is that of Putative 2,3-dihydroxypropane-1-sulfonate exporter (yihP) from Escherichia coli (strain K12).